The primary structure comprises 495 residues: Dipeptide and tripeptide permease A (495 aa).

The Cytoplasmic portion of the chain corresponds to 1–20; the sequence is MTTSALNPLRQPKPFYLIFS. Residues 21-41 form a helical membrane-spanning segment; that stretch reads IEFWERFGFYGLQGILAVYLV. The Periplasmic segment spans residues 42 to 51; sequence KALGLREADS. A helical transmembrane segment spans residues 52–72; sequence FTLFSSFIALVYGLIAVGGWL. Topologically, residues 73 to 81 are cytoplasmic; it reads GDKVLGTKR. 2 consecutive transmembrane segments (helical) span residues 82 to 102 and 103 to 123; these read TILL…ASSE and HISL…LFKA. The Periplasmic segment spans residues 124–145; that stretch reads NPSSLLSKCYEENDPRLDGAFT. The chain crosses the membrane as a helical span at residues 146 to 166; that stretch reads MYYMAINIGSLLSMLATPWLA. Residues 167–171 are Cytoplasmic-facing; it reads DQFGY. The helical transmembrane segment at 172–192 threads the bilayer; the sequence is AHAFALSVVGMLITVANFILM. Residues 193 to 209 are Periplasmic-facing; the sequence is QGWVKNYGSDADFRTPR. The chain crosses the membrane as a helical span at residues 210-230; the sequence is LSTWLAVLAGVVAACAAAALL. Residues 231–232 lie on the Cytoplasmic side of the membrane; sequence LK. A helical transmembrane segment spans residues 233-253; it reads HEIIANVVLAVLSIGVVGLYV. Residues 254–266 are Periplasmic-facing; that stretch reads KETLLLKGAERKK. Residues 267–287 traverse the membrane as a helical segment; that stretch reads MIVAAILMLQATVFFVLYNQM. The Cytoplasmic portion of the chain corresponds to 288-312; that stretch reads PLSLNFFAIHNTEHMLFGIPVQPEQ. The helical transmembrane segment at 313-333 threads the bilayer; it reads FQSLNPFWIMLASPLLALCYN. Over 334–344 the chain is Periplasmic; that stretch reads KLGNRLPMPHK. Residues 345-365 form a helical membrane-spanning segment; that stretch reads FAIGMVLCAGAFLVLPLGAKY. At 366–375 the chain is on the cytoplasmic side; that stretch reads ANAQGLVSSN. Residues 376 to 396 form a helical membrane-spanning segment; that stretch reads WMVLSYLLQSVGELLISGLGL. The Periplasmic portion of the chain corresponds to 397–409; that stretch reads AMVAQLVPQRLMG. A helical transmembrane segment spans residues 410-430; that stretch reads FIMGAWFLTSAASSVIAGWVA. The Cytoplasmic portion of the chain corresponds to 431–451; sequence GLTAAPDNVTNPLATLEIYSR. The helical transmembrane segment at 452–472 threads the bilayer; it reads VFTQIGVVTGVIAVVTIIIAP. Residues 473–495 lie on the Periplasmic side of the membrane; sequence WLHRMTLDEKPAHPEHEMALDAR.

This sequence belongs to the major facilitator superfamily. Proton-dependent oligopeptide transporter (POT/PTR) (TC 2.A.17) family. DtpA subfamily.

The protein resides in the cell inner membrane. In terms of biological role, proton-dependent permease that transports di- and tripeptides. In Chromobacterium violaceum (strain ATCC 12472 / DSM 30191 / JCM 1249 / CCUG 213 / NBRC 12614 / NCIMB 9131 / NCTC 9757 / MK), this protein is Dipeptide and tripeptide permease A.